The sequence spans 226 residues: Ribosome maturation factor RimM (226 aa).

The PRC barrel domain occupies alanine 144–tyrosine 225.

The protein belongs to the RimM family. Binds ribosomal protein uS19.

The protein localises to the cytoplasm. An accessory protein needed during the final step in the assembly of 30S ribosomal subunit, possibly for assembly of the head region. Essential for efficient processing of 16S rRNA. May be needed both before and after RbfA during the maturation of 16S rRNA. It has affinity for free ribosomal 30S subunits but not for 70S ribosomes. The sequence is that of Ribosome maturation factor RimM from Burkholderia ambifaria (strain ATCC BAA-244 / DSM 16087 / CCUG 44356 / LMG 19182 / AMMD) (Burkholderia cepacia (strain AMMD)).